Consider the following 607-residue polypeptide: Cytosolic Fe-S cluster assembly factor nar1 (607 aa).

Cys-20 is a binding site for [4Fe-4S] cluster. Positions 28 to 47 are disordered; the sequence is PKNESSNSQNPYEVTTEDKV. The segment covering 29-40 has biased composition (polar residues); sequence KNESSNSQNPYE. The [4Fe-4S] cluster site is built by Cys-62, Cys-65, Cys-68, Cys-214, and Cys-269. The tract at residues 439-461 is disordered; sequence ARVPAASAGGNRRQPISRNSASA. Residues 452–461 show a composition bias toward polar residues; it reads QPISRNSASA. Residues Cys-475 and Cys-479 each coordinate [4Fe-4S] cluster. The segment covering 494-505 has biased composition (polar residues); sequence ASTSTQSVTAVE. The interval 494-513 is disordered; the sequence is ASTSTQSVTAVENPSKPTPH.

This sequence belongs to the NARF family.

Component of the cytosolic Fe/S protein assembly machinery. Required for maturation of extramitochondrial Fe/S proteins. May play a role in the transfer of pre-assembled Fe/S clusters to target apoproteins. This chain is Cytosolic Fe-S cluster assembly factor nar1 (nar1), found in Aspergillus oryzae (strain ATCC 42149 / RIB 40) (Yellow koji mold).